The primary structure comprises 612 residues: Dihydroxy-acid dehydratase (612 aa).

Mg(2+) is bound at residue D81. Residue C122 participates in [2Fe-2S] cluster binding. D123 and K124 together coordinate Mg(2+). Residue K124 is modified to N6-carboxylysine. C193 lines the [2Fe-2S] cluster pocket. E489 is a Mg(2+) binding site. Residue S515 is the Proton acceptor of the active site.

The protein belongs to the IlvD/Edd family. Homodimer. It depends on [2Fe-2S] cluster as a cofactor. Requires Mg(2+) as cofactor.

It catalyses the reaction (2R)-2,3-dihydroxy-3-methylbutanoate = 3-methyl-2-oxobutanoate + H2O. The catalysed reaction is (2R,3R)-2,3-dihydroxy-3-methylpentanoate = (S)-3-methyl-2-oxopentanoate + H2O. It functions in the pathway amino-acid biosynthesis; L-isoleucine biosynthesis; L-isoleucine from 2-oxobutanoate: step 3/4. It participates in amino-acid biosynthesis; L-valine biosynthesis; L-valine from pyruvate: step 3/4. Its function is as follows. Functions in the biosynthesis of branched-chain amino acids. Catalyzes the dehydration of (2R,3R)-2,3-dihydroxy-3-methylpentanoate (2,3-dihydroxy-3-methylvalerate) into 2-oxo-3-methylpentanoate (2-oxo-3-methylvalerate) and of (2R)-2,3-dihydroxy-3-methylbutanoate (2,3-dihydroxyisovalerate) into 2-oxo-3-methylbutanoate (2-oxoisovalerate), the penultimate precursor to L-isoleucine and L-valine, respectively. The sequence is that of Dihydroxy-acid dehydratase from Pseudomonas aeruginosa (strain LESB58).